A 469-amino-acid polypeptide reads, in one-letter code: Sulfate adenylyltransferase subunit 1 (469 aa).

Residues 22–224 (KDLMRFITCG…NMTWYPGSPL (203 aa)) enclose the tr-type G domain. A G1 region spans residues 31 to 38 (GSVDDGKS). Residue 31–38 (GSVDDGKS) participates in GTP binding. The tract at residues 89-93 (GITID) is G2. A G3 region spans residues 110 to 113 (DTPG). GTP is bound by residues 110 to 114 (DTPGH) and 165 to 168 (NKMD). The segment at 165–168 (NKMD) is G4. The interval 202–204 (SAL) is G5.

The protein belongs to the TRAFAC class translation factor GTPase superfamily. Classic translation factor GTPase family. CysN/NodQ subfamily. In terms of assembly, heterodimer composed of CysD, the smaller subunit, and CysN.

The enzyme catalyses sulfate + ATP + H(+) = adenosine 5'-phosphosulfate + diphosphate. Its pathway is sulfur metabolism; hydrogen sulfide biosynthesis; sulfite from sulfate: step 1/3. In terms of biological role, with CysD forms the ATP sulfurylase (ATPS) that catalyzes the adenylation of sulfate producing adenosine 5'-phosphosulfate (APS) and diphosphate, the first enzymatic step in sulfur assimilation pathway. APS synthesis involves the formation of a high-energy phosphoric-sulfuric acid anhydride bond driven by GTP hydrolysis by CysN coupled to ATP hydrolysis by CysD. In Psychromonas ingrahamii (strain DSM 17664 / CCUG 51855 / 37), this protein is Sulfate adenylyltransferase subunit 1.